Here is a 440-residue protein sequence, read N- to C-terminus: Transposon Ty1-NL2 Gag polyprotein (440 aa).

4 stretches are compositionally biased toward polar residues: residues 1-23, 48-60, 71-97, and 129-152; these read MESQQLSQHSPISHGSACASVTS, TKANSQQTTTPAS, SPQTAQSHSPQNGPYPQQCMMTQNQAN, and QFPQYPSSVGTPLSTPSPESGNTF. 3 disordered regions span residues 1-97, 129-171, and 352-440; these read MESQ…NQAN, QFPQ…YVRP, and GSRN…PETY. Over residues 153-165 the composition is skewed to low complexity; sequence TDSSSADSDMTST. The interval 299 to 401 is RNA-binding; the sequence is NNGIHINNKV…NSKSKTARAH (103 aa). The segment covering 402 to 418 has biased composition (low complexity); that stretch reads NVSTSNNSPSTDNDSIS. Ser-416 is modified (phosphoserine). Over residues 419–428 the composition is skewed to polar residues; the sequence is KSTTEPIQLN. Residues 429–440 are compositionally biased toward basic and acidic residues; it reads NKHDLHLRPETY.

As to quaternary structure, homotrimer.

It is found in the cytoplasm. Its function is as follows. Capsid protein (CA) is the structural component of the virus-like particle (VLP), forming the shell that encapsulates the retrotransposons dimeric RNA genome. The particles are assembled from trimer-clustered units and there are holes in the capsid shells that allow for the diffusion of macromolecules. CA also has nucleocapsid-like chaperone activity, promoting primer tRNA(i)-Met annealing to the multipartite primer-binding site (PBS), dimerization of Ty1 RNA and initiation of reverse transcription. This chain is Transposon Ty1-NL2 Gag polyprotein (TY1A-NL2), found in Saccharomyces cerevisiae (strain ATCC 204508 / S288c) (Baker's yeast).